Reading from the N-terminus, the 600-residue chain is MRVTTSFPLGTLRDTPSEAEIISHQLLLKAGYIRRVNSGIYAYMPLMLRVIEKISAIIEKELNSIGCTKLLLPQLHPADLWKKSERWEGYTAGEGIMFNLKDRQGKEFGLAPTHEEVITSIASETINSYKQLPQCFYQIQTKFRDEIRPRFGLMRSREFIMKDGYSFHSSQNDLASFYEKVSNAYENIFKSCGLQTVGVEADSGAIGGASSKEFMVTADAGEDSILFTQSGSYAANIEKAVSLPSQPIPLKDNIPEWLETPHQKTILEVCDNNNLDPSQIIKVVIFLAQFEGEFNVPILACIRGDQHINEVKLFNLINKLNHFNLLNLKKIEDKKTIEKNLVDLPLGFIGPDLDNNTIKAISNWEKQWTRIIDHSASDLSKFISGGNKVNFHKVFQEFSFDSKDYLIGDIRNAKKGDKISVYDDEELKEKKGIEIGHIFQLGQKYSEKLNAKFSDKDGQLKNLWMGCYGIGVTRIAQAAIEQNHDQKGICWPIHISPFEVIIIPTNLKDPIQSDLTEQIYSNFLINKIDVLLDDRNDRAGVKFKDAELIGIPFQIIIGRDSINKEVELLCRTNNTKLKISTDKLLETFISESEIMYNKKS.

The protein belongs to the class-II aminoacyl-tRNA synthetase family. ProS type 1 subfamily. As to quaternary structure, homodimer.

Its subcellular location is the cytoplasm. The catalysed reaction is tRNA(Pro) + L-proline + ATP = L-prolyl-tRNA(Pro) + AMP + diphosphate. Functionally, catalyzes the attachment of proline to tRNA(Pro) in a two-step reaction: proline is first activated by ATP to form Pro-AMP and then transferred to the acceptor end of tRNA(Pro). As ProRS can inadvertently accommodate and process non-cognate amino acids such as alanine and cysteine, to avoid such errors it has two additional distinct editing activities against alanine. One activity is designated as 'pretransfer' editing and involves the tRNA(Pro)-independent hydrolysis of activated Ala-AMP. The other activity is designated 'posttransfer' editing and involves deacylation of mischarged Ala-tRNA(Pro). The misacylated Cys-tRNA(Pro) is not edited by ProRS. The polypeptide is Proline--tRNA ligase (Prochlorococcus marinus (strain AS9601)).